We begin with the raw amino-acid sequence, 216 residues long: Octanoyltransferase (216 aa).

In terms of domain architecture, BPL/LPL catalytic spans 33 to 216 (AQTADELWIV…AEKLTRHLSG (184 aa)). Residues 72–79 (RGGEVTYH), 148–150 (ALG), and 162–164 (GVS) contribute to the substrate site. Catalysis depends on cysteine 180, which acts as the Acyl-thioester intermediate.

This sequence belongs to the LipB family.

Its subcellular location is the cytoplasm. The catalysed reaction is octanoyl-[ACP] + L-lysyl-[protein] = N(6)-octanoyl-L-lysyl-[protein] + holo-[ACP] + H(+). It functions in the pathway protein modification; protein lipoylation via endogenous pathway; protein N(6)-(lipoyl)lysine from octanoyl-[acyl-carrier-protein]: step 1/2. Functionally, catalyzes the transfer of endogenously produced octanoic acid from octanoyl-acyl-carrier-protein onto the lipoyl domains of lipoate-dependent enzymes. Lipoyl-ACP can also act as a substrate although octanoyl-ACP is likely to be the physiological substrate. The protein is Octanoyltransferase of Herminiimonas arsenicoxydans.